The sequence spans 146 residues: Hemoglobin subunit beta-1 (146 aa).

One can recognise a Globin domain in the interval 2 to 146; that stretch reads HWTAEEKQLI…VAHALARRYH (145 aa). Heme b is bound by residues His63 and His92.

Belongs to the globin family. In terms of assembly, heterotetramer of two alpha chains and two beta chains. Red blood cells.

In terms of biological role, involved in oxygen transport from the lung to the various peripheral tissues. This Iguana iguana (Common iguana) protein is Hemoglobin subunit beta-1 (HBB1).